Consider the following 319-residue polypeptide: Protein SICKLE (319 aa).

3 disordered regions span residues 1–59, 71–239, and 262–299; these read MEDS…TQRF, SFKK…PGAE, and CSDA…SNQQ. Polar residues-rich tracts occupy residues 27–56 and 78–88; these read TTGT…SFET and PKQQYISSPSH. Positions 93–103 are enriched in pro residues; it reads PVPPQFPPSVP. Over residues 185 to 210 the composition is skewed to polar residues; it reads SYNNTPPQFSNYGRQNANWGGNTYPN. A compositionally biased stretch (basic and acidic residues) spans 228–238; sequence DGGRRPMEPGA. A compositionally biased stretch (polar residues) spans 285-299; sequence SVTSEATHKTSSNQQ.

In terms of assembly, interacts with ubiquitin thioesterases UBP12 and UBP13, and with protein phosphatase 2A subunits PP2AB1, PP2AB2, PP2A3, PP2A4, PP2AA1 and PP2AA2. In terms of tissue distribution, expressed in the shoot apical meristem (SAM), embryos, seedlings, root tips, and root and leaf primordia.

It localises to the nucleus. Its subcellular location is the cytoplasm. The protein localises to the cytosol. Involved in miRNAs and siRNAs biogenesis and thus promotes gene silencing. Modulates auxin (IAA) transport-related developmental programs by regulating protein phosphatase 2A (PP2As)-driven auxin efflux carrier PIN proteins recycling and polarity. Required during development. Necessary for abiotic stress (e.g. chilling and salt) tolerance. In Arabidopsis thaliana (Mouse-ear cress), this protein is Protein SICKLE.